The chain runs to 392 residues: Heat-inducible transcription repressor HrcA (392 aa).

Belongs to the HrcA family.

In terms of biological role, negative regulator of class I heat shock genes (grpE-dnaK-dnaJ and groELS operons). Prevents heat-shock induction of these operons. The polypeptide is Heat-inducible transcription repressor HrcA (Synechococcus sp. (strain JA-3-3Ab) (Cyanobacteria bacterium Yellowstone A-Prime)).